A 252-amino-acid polypeptide reads, in one-letter code: Geranylgeranylglyceryl phosphate synthase (252 aa).

2 residues coordinate Mg(2+): Asp-25 and Ser-54. Residues 174–180 (FMDAGSG), 205–206 (GG), and 227–228 (GN) contribute to the sn-glycerol 1-phosphate site.

Belongs to the GGGP/HepGP synthase family. Group II subfamily. Homohexamer. Mg(2+) is required as a cofactor.

It catalyses the reaction sn-glycerol 1-phosphate + (2E,6E,10E)-geranylgeranyl diphosphate = sn-3-O-(geranylgeranyl)glycerol 1-phosphate + diphosphate. Prenyltransferase that catalyzes the transfer of the geranylgeranyl moiety of geranylgeranyl diphosphate (GGPP) to the C3 hydroxyl of sn-glycerol-1-phosphate (G1P). In Chitinophaga pinensis (strain ATCC 43595 / DSM 2588 / LMG 13176 / NBRC 15968 / NCIMB 11800 / UQM 2034), this protein is Geranylgeranylglyceryl phosphate synthase.